The sequence spans 190 residues: Translation initiation factor IF-3 (190 aa).

This sequence belongs to the IF-3 family. As to quaternary structure, monomer.

The protein resides in the cytoplasm. Functionally, IF-3 binds to the 30S ribosomal subunit and shifts the equilibrium between 70S ribosomes and their 50S and 30S subunits in favor of the free subunits, thus enhancing the availability of 30S subunits on which protein synthesis initiation begins. The sequence is that of Translation initiation factor IF-3 from Prochlorococcus marinus subsp. pastoris (strain CCMP1986 / NIES-2087 / MED4).